A 313-amino-acid chain; its full sequence is Putative S-adenosyl-L-methionine-dependent methyltransferase MAV_5149 (313 aa).

Residues Asp135 and 164-165 (DL) each bind S-adenosyl-L-methionine.

This sequence belongs to the UPF0677 family.

Its function is as follows. Exhibits S-adenosyl-L-methionine-dependent methyltransferase activity. In Mycobacterium avium (strain 104), this protein is Putative S-adenosyl-L-methionine-dependent methyltransferase MAV_5149.